We begin with the raw amino-acid sequence, 616 residues long: METVDTSQRLARLRELMKERNVDVYLVPSEDSHQSEYIAPCDGRREFISGFSGSAGCAIVSMTKAALSTDGRYFNQASKQLDNNWLLLKRGIESMPTWQEWTAEQLEGGKVVGVDPSLITASDARSLSETIKKSGGSLLGVQENLVDLVWGKDRPCRPSEKVTVHPVEFAGKSFEEKITDLRKELEKKKSAGFVVSMLDEVAWLFNLRGNDIPYNPVFFSYAIITPSTADLYIDEEKLSADVKKHLGDKVSLKPYTSIFEDAKALGQSAQAEVNGGASDPPRKFFISTKASWSLSLALGGANKVEEVRSPISDAKAIKNDTELEGMRACHIRDGAALTKYFAWLENELVNKKTVLNEVEASDKLEEIRSKQKNFVGLSFDTISSSGPNAAVVHYKAERKNCSIIDPEAVYLCDSGAQYLDGTTDTTRTLHFGEPTEKERKAYTLVLKGMIAIDTAIFPKGTTGFSLDTLARQFLWKEGLDYLHGTGHGVGSYLNVHEGPIGIGTRVQYSETPLSVGNVISDEPGYYEDGKFGIRIENIIMAREVKTTFSFGERPWLGFEHVTMTPLCRKLIDPSLLNDAEKKWINEYHSEVWEKTSGYFAEDELTRNWLKRETQPI.

Residues aspartate 413, aspartate 424, glutamate 522, and glutamate 536 each coordinate Mn(2+).

Belongs to the peptidase M24B family. The cofactor is Mn(2+).

It carries out the reaction Release of any N-terminal amino acid, including proline, that is linked to proline, even from a dipeptide or tripeptide.. Catalyzes the removal of a penultimate prolyl residue from the N-termini of peptides. This is Probable Xaa-Pro aminopeptidase P (AMPP) from Paracoccidioides brasiliensis (strain Pb03).